A 76-amino-acid chain; its full sequence is Large ribosomal subunit protein bL31 (76 aa).

Zn(2+) contacts are provided by Cys16, Cys18, Cys37, and Cys40.

It belongs to the bacterial ribosomal protein bL31 family. Type A subfamily. In terms of assembly, part of the 50S ribosomal subunit. It depends on Zn(2+) as a cofactor.

Functionally, binds the 23S rRNA. In Solibacter usitatus (strain Ellin6076), this protein is Large ribosomal subunit protein bL31.